Reading from the N-terminus, the 593-residue chain is Protein GAMETE EXPRESSED 1 (593 aa).

The signal sequence occupies residues 1-24; that stretch reads MDRFSRKCLLFLLLIILLDSPLTC. Residues 25–427 are Extracellular-facing; sequence HSWGWFSSSS…LHNAMLLESR (403 aa). Coiled coils occupy residues 156-194 and 350-387; these read CQQLQSNAFKNEIERLVNELKNTAQYTEDKLDILESKSD and EALQESRNTLQRLKEFSQEQQEDLAKRQEKLQEVHDHL. Residues 428-448 form a helical membrane-spanning segment; it reads VIKAFVIYFLSIFVIYMFTST. Topologically, residues 449–457 are cytoplasmic; the sequence is KQTYIIRPR. A helical membrane pass occupies residues 458-476; sequence LYIGLCVTLALEVASLRYV. At 477 to 485 the chain is on the extracellular side; it reads NDTERQAWM. Residues 486 to 506 traverse the membrane as a helical segment; the sequence is INLIRSLFALLASAQLLHAAL. Residues 507–593 are Cytoplasmic-facing; that stretch reads SYRDYEVLNH…TRRLYNFRPR (87 aa).

Homodimer. As to expression, in tricellular pollen, expressed in mature sperm cells. Not expressed in bicellular or unicellular pollen. Detected in ovules, roots and guard cells. Expressed in the embryo sac before cellularization, in the egg cell after cellularization, in the zygote/embryo immediately after fertilization and in the pollen vegetative cell.

It localises to the cell membrane. In terms of biological role, has a dual function during gametophyte development and early embryogenesis. Required for correct pollen maturation. The protein is Protein GAMETE EXPRESSED 1 (GEX1) of Arabidopsis thaliana (Mouse-ear cress).